The following is a 208-amino-acid chain: N-(5'-phosphoribosyl)anthranilate isomerase (208 aa).

This sequence belongs to the TrpF family.

It catalyses the reaction N-(5-phospho-beta-D-ribosyl)anthranilate = 1-(2-carboxyphenylamino)-1-deoxy-D-ribulose 5-phosphate. The protein operates within amino-acid biosynthesis; L-tryptophan biosynthesis; L-tryptophan from chorismate: step 3/5. The polypeptide is N-(5'-phosphoribosyl)anthranilate isomerase (Lactiplantibacillus plantarum (strain ATCC BAA-793 / NCIMB 8826 / WCFS1) (Lactobacillus plantarum)).